The primary structure comprises 498 residues: ATP synthase subunit beta, chloroplastic (498 aa).

Position 6 is a phosphothreonine (T6). The residue at position 13 (S13) is a Phosphoserine. 172-179 (GGAGVGKT) lines the ATP pocket.

Belongs to the ATPase alpha/beta chains family. In terms of assembly, F-type ATPases have 2 components, CF(1) - the catalytic core - and CF(0) - the membrane proton channel. CF(1) has five subunits: alpha(3), beta(3), gamma(1), delta(1), epsilon(1). CF(0) has four main subunits: a(1), b(1), b'(1) and c(9-12).

It is found in the plastid. It localises to the chloroplast thylakoid membrane. It carries out the reaction ATP + H2O + 4 H(+)(in) = ADP + phosphate + 5 H(+)(out). Its function is as follows. Produces ATP from ADP in the presence of a proton gradient across the membrane. The catalytic sites are hosted primarily by the beta subunits. This chain is ATP synthase subunit beta, chloroplastic, found in Crucihimalaya wallichii (Rock-cress).